The chain runs to 259 residues: Global transcriptional regulator CodY (259 aa).

The segment at 1 to 155 is GAF domain; the sequence is MTLLEKTRKI…GGTVVGMEIL (155 aa). Residues 203–222 constitute a DNA-binding region (H-T-H motif); that stretch reads ASKIADRVGITRSVIVNALR.

It belongs to the CodY family.

It is found in the cytoplasm. In terms of biological role, DNA-binding global transcriptional regulator which is involved in the adaptive response to starvation and acts by directly or indirectly controlling the expression of numerous genes in response to nutrient availability. During rapid exponential growth, CodY is highly active and represses genes whose products allow adaptation to nutrient depletion. In Listeria monocytogenes serotype 4b (strain CLIP80459), this protein is Global transcriptional regulator CodY.